A 743-amino-acid chain; its full sequence is Threonine--tRNA ligase (743 aa).

Low complexity predominate over residues 1–15 (MSADSPSSPASSQAA). The segment at 1 to 30 (MSADSPSSPASSQAAEVQVRLPDGSLKTQP) is disordered. The 64-residue stretch at 13 to 76 (QAAEVQVRLP…GEIADDENVV (64 aa)) folds into the TGS domain. A catalytic region spans residues 264–619 (DHRVLGKQHG…LIEHFAGAFP (356 aa)). The insert stretch occupies residues 354–404 (AWSTRLDKDDLSKDDEDKLIAAAEVFGVKLPDYKPSASNDAKKDVLHRWQL). Zn(2+) is bound by residues Cys-416, His-467, and His-596.

It belongs to the class-II aminoacyl-tRNA synthetase family. In terms of assembly, homodimer. Zn(2+) serves as cofactor.

It is found in the cytoplasm. The catalysed reaction is tRNA(Thr) + L-threonine + ATP = L-threonyl-tRNA(Thr) + AMP + diphosphate + H(+). Catalyzes the attachment of threonine to tRNA(Thr) in a two-step reaction: L-threonine is first activated by ATP to form Thr-AMP and then transferred to the acceptor end of tRNA(Thr). Also edits incorrectly charged L-seryl-tRNA(Thr). In Rhodopirellula baltica (strain DSM 10527 / NCIMB 13988 / SH1), this protein is Threonine--tRNA ligase.